Consider the following 345-residue polypeptide: Biotin synthase (345 aa).

The region spanning 38–256 is the Radical SAM core domain; it reads RQVQVSTLLS…IAVARIMMPS (219 aa). [4Fe-4S] cluster is bound by residues C53, C57, and C60. Positions 97, 128, 188, and 260 each coordinate [2Fe-2S] cluster.

This sequence belongs to the radical SAM superfamily. Biotin synthase family. In terms of assembly, homodimer. Requires [4Fe-4S] cluster as cofactor. It depends on [2Fe-2S] cluster as a cofactor.

The catalysed reaction is (4R,5S)-dethiobiotin + (sulfur carrier)-SH + 2 reduced [2Fe-2S]-[ferredoxin] + 2 S-adenosyl-L-methionine = (sulfur carrier)-H + biotin + 2 5'-deoxyadenosine + 2 L-methionine + 2 oxidized [2Fe-2S]-[ferredoxin]. It functions in the pathway cofactor biosynthesis; biotin biosynthesis; biotin from 7,8-diaminononanoate: step 2/2. Functionally, catalyzes the conversion of dethiobiotin (DTB) to biotin by the insertion of a sulfur atom into dethiobiotin via a radical-based mechanism. The sequence is that of Biotin synthase from Yersinia pestis bv. Antiqua (strain Antiqua).